A 135-amino-acid polypeptide reads, in one-letter code: ATP synthase epsilon chain (135 aa).

The span at 89–100 shows a compositional bias: basic and acidic residues; sequence SGKAEAELEKAK. The segment at 89–114 is disordered; sequence SGKAEAELEKAKNQLSQNKDQGNSPE. Residues 101–112 are compositionally biased toward polar residues; sequence NQLSQNKDQGNS.

It belongs to the ATPase epsilon chain family. F-type ATPases have 2 components, CF(1) - the catalytic core - and CF(0) - the membrane proton channel. CF(1) has five subunits: alpha(3), beta(3), gamma(1), delta(1), epsilon(1). CF(0) has three main subunits: a, b and c.

Its subcellular location is the cellular thylakoid membrane. Functionally, produces ATP from ADP in the presence of a proton gradient across the membrane. The protein is ATP synthase epsilon chain of Prochlorococcus marinus (strain NATL2A).